Here is a 219-residue protein sequence, read N- to C-terminus: Thiopurine S-methyltransferase (219 aa).

S-adenosyl-L-methionine contacts are provided by Trp10, Leu45, Glu66, and Arg123.

Belongs to the class I-like SAM-binding methyltransferase superfamily. TPMT family.

Its subcellular location is the cytoplasm. It catalyses the reaction S-adenosyl-L-methionine + a thiopurine = S-adenosyl-L-homocysteine + a thiopurine S-methylether.. The sequence is that of Thiopurine S-methyltransferase from Shewanella frigidimarina (strain NCIMB 400).